The primary structure comprises 641 residues: Probable ATP-dependent helicase YpvA (641 aa).

The Helicase ATP-binding domain occupies 29–303 (YDILPEKGFD…EFAELIEDAL (275 aa)). Residue 64–71 (AGVGTGKT) coordinates ATP. [4Fe-4S] cluster-binding residues include Cys-133, Cys-197, Cys-200, and Cys-206. Residues 257 to 260 (DEGH) carry the DEGH box motif.

The protein belongs to the helicase family. DinG subfamily. Requires [4Fe-4S] cluster as cofactor.

It carries out the reaction Couples ATP hydrolysis with the unwinding of duplex DNA at the replication fork by translocating in the 5'-3' direction. This creates two antiparallel DNA single strands (ssDNA). The leading ssDNA polymer is the template for DNA polymerase III holoenzyme which synthesizes a continuous strand.. The enzyme catalyses ATP + H2O = ADP + phosphate + H(+). Its function is as follows. Might be a 5'-3' DNA helicase. The polypeptide is Probable ATP-dependent helicase YpvA (ypvA) (Bacillus subtilis (strain 168)).